The sequence spans 403 residues: MDLRDRFTEMREMDLQVQNAMDQLEQRASEFFMNAKKNKPEWREEQMASIKKDYYKALEDADEKVQLANQIYDLVDRHLRKLDQELAKFKMELEADNAGITEILERRSLELDTPSQPVNNHHAHSHTPVEKRKYNPTSHHTTTDHIPEKKFKSEALLSTLTSDASKENTLGCRNNNSTASSNNAYNVNSSQPLGSYNIGSLSSGTGAGAITMAAAQAVQATAQMREGRRTSSLKASYEAFKNNDFQLGKEFSMARETVGYSSSSALMTTLTQNASSSAADSRSGRKSKNNNKSSSQQSSSSSSSSSLSSCSSSSTVVQEISQQTTVVPESDSNSQVDWTYDPNEPRYCICNQVSYGEMVGCDNQDCPIEWFHYGCVGLTEAPKGKWYCPQCTAAMKRRGSRHK.

Residues 112–149 (DTPSQPVNNHHAHSHTPVEKRKYNPTSHHTTTDHIPEK) are disordered. Glycyl lysine isopeptide (Lys-Gly) (interchain with G-Cter in SUMO2) cross-links involve residues K133, K150, and K152. K166 is modified (N6-acetyllysine). K241 participates in a covalent cross-link: Glycyl lysine isopeptide (Lys-Gly) (interchain with G-Cter in SUMO2). The residue at position 249 (K249) is an N6-acetyllysine. A disordered region spans residues 271-310 (TQNASSSAADSRSGRKSKNNNKSSSQQSSSSSSSSSLSSC). Residues 290–310 (NNKSSSQQSSSSSSSSSLSSC) are compositionally biased toward low complexity. A PHD-type zinc finger spans residues 345 to 394 (PRYCICNQVSYGEMVGCDNQDCPIEWFHYGCVGLTEAPKGKWYCPQCTAA). Zn(2+) is bound by residues C348, C350, C361, C366, H372, C375, C388, and C391.

It belongs to the ING family. In terms of assembly, interacts with H3K4me3 and to a lesser extent with H3K4me2. Component of the NuA4 histone acetyltransferase complex which contains the catalytic subunit KAT5/TIP60 and the subunits EP400, TRRAP/PAF400, BRD8/SMAP, EPC1, DMAP1/DNMAP1, RUVBL1/TIP49, RUVBL2, ING3, actin, ACTL6A/BAF53A, MORF4L1/MRG15, MORF4L2/MRGX, MRGBP, YEATS4/GAS41, VPS72/YL1 and MEAF6. The NuA4 complex interacts with MYC. HTATTIP/TIP60, EPC1, and ING3 together constitute a minimal HAT complex termed Piccolo NuA4. Component of a SWR1-like complex.

It is found in the nucleus. Component of the NuA4 histone acetyltransferase (HAT) complex which is involved in transcriptional activation of select genes principally by acetylation of nucleosomal histones H4 and H2A. This modification may both alter nucleosome - DNA interactions and promote interaction of the modified histones with other proteins which positively regulate transcription. This complex may be required for the activation of transcriptional programs associated with oncogene and proto-oncogene mediated growth induction, tumor suppressor mediated growth arrest and replicative senescence, apoptosis, and DNA repair. NuA4 may also play a direct role in DNA repair when directly recruited to sites of DNA damage. Component of a SWR1-like complex that specifically mediates the removal of histone H2A.Z/H2AZ1 from the nucleosome. This chain is Inhibitor of growth protein 3 (ING3), found in Pongo abelii (Sumatran orangutan).